The sequence spans 118 residues: UPF0102 protein PC1_0307 (118 aa).

Belongs to the UPF0102 family.

This chain is UPF0102 protein PC1_0307, found in Pectobacterium carotovorum subsp. carotovorum (strain PC1).